The following is a 677-amino-acid chain: Membrane-associated tyrosine- and threonine-specific cdc2-inhibitory kinase wee-1.3 (677 aa).

A compositionally biased stretch (polar residues) spans Met-1–Pro-22. Positions Met-1 to Gln-30 are disordered. The 248-residue stretch at Phe-108–Ile-355 folds into the Protein kinase domain. ATP-binding positions include Ile-114–Val-122 and Lys-137. The Proton acceptor role is filled by Asp-228. Mg(2+) contacts are provided by Asn-233 and Asp-246. 2 disordered regions span residues Phe-478–Arg-526 and Glu-632–Val-677. A compositionally biased stretch (polar residues) spans Ala-489–Ile-499. Residues Thr-638 to Arg-652 show a composition bias toward basic and acidic residues.

Belongs to the protein kinase superfamily. Ser/Thr protein kinase family. WEE1 subfamily.

It is found in the golgi apparatus membrane. The protein localises to the cytoplasm. The catalysed reaction is L-seryl-[protein] + ATP = O-phospho-L-seryl-[protein] + ADP + H(+). It carries out the reaction L-threonyl-[protein] + ATP = O-phospho-L-threonyl-[protein] + ADP + H(+). Its function is as follows. Acts as a negative regulator of entry into mitosis (G2 to M transition) by phosphorylation of the CDK1 kinase during oocyte maturation. Required for oocyte maturation, embryonic development, germline proliferation and initiation of meiosis during spermatogenesis. Required for chromosome structure during mitosis and negative regulation of nuclear envelope breakdown. The sequence is that of Membrane-associated tyrosine- and threonine-specific cdc2-inhibitory kinase wee-1.3 (wee-1.3) from Caenorhabditis elegans.